We begin with the raw amino-acid sequence, 503 residues long: Anthranilate synthase component 1 3 (503 aa).

Residue 269 to 271 participates in L-tryptophan binding; it reads PYS. 304-305 is a binding site for chorismate; it reads GT. Glutamate 331 contributes to the Mg(2+) binding site. Residues tyrosine 419, arginine 439, 453–455, and glycine 455 contribute to the chorismate site; that span reads GSG. Mg(2+) is bound at residue glutamate 468.

It belongs to the anthranilate synthase component I family. Tetramer of two components I and two components II. Requires Mg(2+) as cofactor.

It catalyses the reaction chorismate + L-glutamine = anthranilate + pyruvate + L-glutamate + H(+). The protein operates within amino-acid biosynthesis; L-tryptophan biosynthesis; L-tryptophan from chorismate: step 1/5. This chain is Anthranilate synthase component 1 3 (trpE3), found in Haloarcula marismortui (strain ATCC 43049 / DSM 3752 / JCM 8966 / VKM B-1809) (Halobacterium marismortui).